A 207-amino-acid chain; its full sequence is Dephospho-CoA kinase (207 aa).

A DPCK domain is found at 4-203; sequence VIGLTGGIAS…EEGYIEKPNY (200 aa). Residue 12–17 participates in ATP binding; the sequence is ASGKST.

This sequence belongs to the CoaE family.

The protein resides in the cytoplasm. It carries out the reaction 3'-dephospho-CoA + ATP = ADP + CoA + H(+). It participates in cofactor biosynthesis; coenzyme A biosynthesis; CoA from (R)-pantothenate: step 5/5. Its function is as follows. Catalyzes the phosphorylation of the 3'-hydroxyl group of dephosphocoenzyme A to form coenzyme A. The sequence is that of Dephospho-CoA kinase from Staphylococcus aureus (strain MRSA252).